The primary structure comprises 448 residues: MNAHEVNFDGLVGPTHNYGGLSYGNVASQSNSQAVSNPKEAAKQGLAKMKALMEMGFKQGVLAPQARPDTAALRSLGFSGSDEEVIRRAAKEAMPLLAACSSASSMWTANAATVSPSADTADGRVHFTAANLNCKFHRSIEHPTTSRVLAAMFNDERYFAHHAALPAVSQFGDEGAANHTRFCKDYGDAGVEFFVFGRSAFDSRFPAPQRYPARQTLEACQAVARLHGLSEAGVVYAQQNPAVIDQGVFHNDVISVGNGEVLFHHEDAFLDTEKVLAELHDKLGRRGGRFRAICVPRDQVAVEDAVKSYLFNSQLLSKADGSMLLVVPEECRNNPRVWNYLDQLTGDDGPIREVKVFDLKQSMQNGGGPACLRLRVALQERELAAVNPGVIMSAGLYDTLVAWVDRHYRDRLSETDLADPQLLLECRTALDELTQILKLGSVYSFQLD.

Substrate is bound by residues 19 to 28, Asn-110, and 137 to 138; these read GGLSYGNVAS and HR. The active site involves Glu-174. Substrate is bound at residue Arg-214. Residue His-250 is part of the active site. Substrate-binding residues include Asp-252 and Asn-365. Cys-371 acts as the Nucleophile in catalysis.

It belongs to the succinylarginine dihydrolase family. In terms of assembly, homodimer.

The enzyme catalyses N(2)-succinyl-L-arginine + 2 H2O + 2 H(+) = N(2)-succinyl-L-ornithine + 2 NH4(+) + CO2. It participates in amino-acid degradation; L-arginine degradation via AST pathway; L-glutamate and succinate from L-arginine: step 2/5. Its function is as follows. Catalyzes the hydrolysis of N(2)-succinylarginine into N(2)-succinylornithine, ammonia and CO(2). The protein is N-succinylarginine dihydrolase of Pseudomonas aeruginosa (strain UCBPP-PA14).